The chain runs to 100 residues: Urease subunit gamma (100 aa).

The protein belongs to the urease gamma subunit family. In terms of assembly, heterotrimer of UreA (gamma), UreB (beta) and UreC (alpha) subunits. Three heterotrimers associate to form the active enzyme.

Its subcellular location is the cytoplasm. It carries out the reaction urea + 2 H2O + H(+) = hydrogencarbonate + 2 NH4(+). It functions in the pathway nitrogen metabolism; urea degradation; CO(2) and NH(3) from urea (urease route): step 1/1. This chain is Urease subunit gamma, found in Limosilactobacillus fermentum (Lactobacillus fermentum).